The primary structure comprises 113 residues: MKKLKSFGGKNLSGKSMNQLQKLQEEMQKKLQEVEEGFSNVEVEVSVGGGAIKILATADRKVKDIEIDEDLLSDGETLKDLLTAGINELMEKIEKIREEEMAKVTQNLLPFGF.

The protein belongs to the YbaB/EbfC family. Homodimer.

It is found in the cytoplasm. The protein resides in the nucleoid. In terms of biological role, binds to DNA and alters its conformation. May be involved in regulation of gene expression, nucleoid organization and DNA protection. The sequence is that of Nucleoid-associated protein THA_1374 from Thermosipho africanus (strain TCF52B).